A 370-amino-acid chain; its full sequence is D-aspartate oxidase (370 aa).

8 residues coordinate FAD: Ile-15, Ala-49, Ser-50, Gly-54, Val-166, Arg-317, Gly-346, and Gln-348. The short motif at 368–370 (ARL) is the Microbody targeting signal element.

This sequence belongs to the DAMOX/DASOX family. Homotetramer. It depends on FAD as a cofactor.

It localises to the peroxisome matrix. It catalyses the reaction D-aspartate + O2 + H2O = oxaloacetate + H2O2 + NH4(+). It carries out the reaction D-glutamate + O2 + H2O = H2O2 + 2-oxoglutarate + NH4(+). Inhibited by malonate and D-malate. Very mildly inhibited by benzoate, ethylenediaminetetraacetic acid (EDTA), crotonate and anthranilate. May be very mildly inhibited by meso-tartrate. Its function is as follows. Selectively catalyzes the oxidative deamination of acidic amino acids. Protects the organism from the toxicity of D-amino acids. Enables the organism to utilize D-amino acids as a source of nutrients. Enables the organism to utilize D-aspartate as a source of nitrogen and carbon. The chain is D-aspartate oxidase from Vanrija humicola (Yeast).